Reading from the N-terminus, the 561-residue chain is Asparagine synthetase [glutamine-hydrolyzing] (561 aa).

Cysteine 2 (for GATase activity) is an active-site residue. One can recognise a Glutamine amidotransferase type-2 domain in the interval 2–191 (CGIWALFGSD…PGHYEVLDLK (190 aa)). L-glutamine-binding positions include 49-53 (RLAVV), 75-77 (NGE), and aspartate 97. An Asparagine synthetase domain is found at 213–536 (HAIYDSVEKL…PGRADWLTHY (324 aa)). Residues leucine 256, isoleucine 288, and 363 to 364 (SG) each bind ATP. N6-acetyllysine is present on lysine 385. Threonine 545 is modified (phosphothreonine). Serine 557 carries the phosphoserine modification.

It catalyses the reaction L-aspartate + L-glutamine + ATP + H2O = L-asparagine + L-glutamate + AMP + diphosphate + H(+). It participates in amino-acid biosynthesis; L-asparagine biosynthesis; L-asparagine from L-aspartate (L-Gln route): step 1/1. This chain is Asparagine synthetase [glutamine-hydrolyzing] (Asns), found in Rattus norvegicus (Rat).